A 212-amino-acid chain; its full sequence is Ribosomal RNA small subunit methyltransferase G (212 aa).

S-adenosyl-L-methionine is bound by residues Gly80, Leu85, 131-132 (AE), and Arg146.

The protein belongs to the methyltransferase superfamily. RNA methyltransferase RsmG family.

It localises to the cytoplasm. The enzyme catalyses guanosine(527) in 16S rRNA + S-adenosyl-L-methionine = N(7)-methylguanosine(527) in 16S rRNA + S-adenosyl-L-homocysteine. Specifically methylates the N7 position of guanine in position 527 of 16S rRNA. This chain is Ribosomal RNA small subunit methyltransferase G, found in Stenotrophomonas maltophilia (strain R551-3).